We begin with the raw amino-acid sequence, 407 residues long: MGQKERSTADTLPDLEEWKSAAGLRWWQTAVVDGSGSGNEVIEGPQNARVLKGSQARFNCTVSQGWKLIMWALSDMVVLSVRPMEPIITNDRFTSQRYDQGGNFTSEMIIHNVEPSDSGNIRCSLQNSRLHGSAYLTVQVMGELFIPSVNLVVAENEPCEVTCLPSHWTRLPDISWELGLLVSHSSYYFVPEPSDLQSAVSILALTPQSNGTLTCVATWKSLKARKSATVNLTVIRCPQDTGGGINIPGVLSSLPSLGFSLPTWGKVGLGLAGTMLLTPTCTLTIRCCCCRRRCCGCNCCCRCCFCCRRKRGFRIQFQKKSEKEKTNKETETESGNENSGYNSDEQKTTDTASLPPKSCESSDPEQRNSSCGPPHQRADQRPPRPASHPQASFNLASPEKVSNTTVV.

Residues 1 to 266 (MGQKERSTAD…LGFSLPTWGK (266 aa)) lie on the Extracellular side of the membrane. Ig-like V-type domains follow at residues 39 to 139 (NEVI…LTVQ) and 142 to 231 (GELF…ATVN). 4 N-linked (GlcNAc...) asparagine glycosylation sites follow: Asn-59, Asn-103, Asn-210, and Asn-231. 2 disulfide bridges follow: Cys-60/Cys-123 and Cys-163/Cys-215. A helical transmembrane segment spans residues 267 to 285 (VGLGLAGTMLLTPTCTLTI). Topologically, residues 286-407 (RCCCCRRRCC…PEKVSNTTVV (122 aa)) are cytoplasmic. A compositionally biased stretch (basic and acidic residues) spans 320 to 331 (KSEKEKTNKETE). The disordered stretch occupies residues 320 to 407 (KSEKEKTNKE…PEKVSNTTVV (88 aa)). The span at 389–407 (PQASFNLASPEKVSNTTVV) shows a compositional bias: polar residues.

This sequence belongs to the immunoglobulin superfamily. Interacts with MAGI1 at tight junctions, forms a tripartite complex with NPHS1. Interacts with LNX1 isoform 2 via its PDZ 2 domain, it may also interact with other isoforms containing this domain.

The protein localises to the apical cell membrane. Its subcellular location is the cell junction. It localises to the tight junction. Its function is as follows. Provides, together with MAGI1, an adhesion machinery at tight junctions, which may regulate the permeability of kidney glomerulus and small intestinal epithelial cells. Mediates calcium-independent homophilic cell adhesion. In testis, it may function as a cell adhesion molecule rather than a tight-junction protein. It may participate in the adhesion between spermatogonia-spermatogonia, spermatogonia-Sertoli cells, and Sertoli cells-Sertoli cells. The polypeptide is Immunoglobulin superfamily member 5 (IGSF5) (Homo sapiens (Human)).